The sequence spans 260 residues: UPF0328 protein ECU07_1870/ECU10_0030 (260 aa).

It belongs to the UPF0328 family.

The polypeptide is UPF0328 protein ECU07_1870/ECU10_0030 (Encephalitozoon cuniculi (strain GB-M1) (Microsporidian parasite)).